The chain runs to 854 residues: Gamma-secretase-activating protein (854 aa).

Belongs to the GSAP family. As to quaternary structure, interacts with APP; specifically interacts with the CTF-alpha product of APP. Interacts with the gamma-secretase complex. The protein is first synthesized as a holoprotein form of 98 kDa and rapidly processed into the gamma-secretase-activating protein 16 kDa C-terminal form, which constitutes the predominant form. Widely expressed.

The protein resides in the golgi apparatus. The protein localises to the trans-Golgi network. In terms of biological role, regulator of gamma-secretase activity, which specifically activates the production of amyloid-beta protein (amyloid-beta protein 40 and amyloid-beta protein 42), without affecting the cleavage of other gamma-secretase targets such has Notch. The gamma-secretase complex is an endoprotease complex that catalyzes the intramembrane cleavage of integral membrane proteins such as Notch receptors and APP (amyloid-beta precursor protein). Specifically promotes the gamma-cleavage of APP CTF-alpha (also named APP-CTF) by the gamma-secretase complex to generate amyloid-beta, while it reduces the epsilon-cleavage of APP CTF-alpha, leading to a low production of AICD. The polypeptide is Gamma-secretase-activating protein (GSAP) (Homo sapiens (Human)).